Reading from the N-terminus, the 45-residue chain is Protamine Z2 (45 aa).

A compositionally biased stretch (basic residues) spans 1–23 (MKCGRKRRRRRRHACKRKKRACK). Positions 1 to 26 (MKCGRKRRRRRRHACKRKKRACKQRS) are disordered.

As to expression, testis.

It is found in the nucleus. The protein localises to the chromosome. Functionally, protamines substitute for histones in the chromatin of sperm during the haploid phase of spermatogenesis. They compact sperm DNA into a highly condensed, stable and inactive complex. This Scyliorhinus canicula (Small-spotted catshark) protein is Protamine Z2.